The following is a 181-amino-acid chain: Diphosphoinositol polyphosphate phosphohydrolase NUDT4B (181 aa).

Substrate contacts are provided by residues R10, 18–20, and 39–41; these read KKR and SSR. One can recognise a Nudix hydrolase domain in the interval 18 to 145; sequence KKRAACLCFR…VHAEYLEKLK (128 aa). Residues G50 and E66 each contribute to the Mg(2+) site. Positions 51–72 match the Nudix box motif; sequence GGMEPEEEPGGAAVREVYEEAG. Catalysis depends on E69, which acts as the Proton acceptor. E70 serves as a coordination point for Mg(2+). Residues 90–92, R116, and K134 each bind substrate; that span reads RKH.

This sequence belongs to the Nudix hydrolase family. DIPP subfamily. It depends on Mg(2+) as a cofactor. Mn(2+) is required as a cofactor.

The protein resides in the cytoplasm. It carries out the reaction diphospho-myo-inositol polyphosphate + H2O = myo-inositol polyphosphate + phosphate.. In terms of biological role, cleaves a beta-phosphate from the diphosphate groups in PP-InsP5 (diphosphoinositol pentakisphosphate), PP-InsP4 and [PP]2-InsP4 (bisdiphosphoinositol tetrakisphosphate), suggesting that it may play a role in signal transduction. Also able to catalyze the hydrolysis of dinucleoside oligophosphate Ap6A, but not Ap5A. The major reaction products are ADP and p4a from Ap6A. Also able to hydrolyze 5-phosphoribose 1-diphosphate. Does not play a role in U8 snoRNA decapping activity. Binds U8 snoRNA. This chain is Diphosphoinositol polyphosphate phosphohydrolase NUDT4B, found in Homo sapiens (Human).